Consider the following 479-residue polypeptide: Cardiolipin synthase A (479 aa).

2 helical membrane-spanning segments follow: residues 8 to 28 (FFGY…LHAV) and 38 to 58 (IAWA…YLVF). PLD phosphodiesterase domains are found at residues 218–245 (VNFR…GDEY) and 392–419 (QPGF…DNRS). Catalysis depends on residues H223, K225, D230, H397, K399, and D404.

The protein belongs to the phospholipase D family. Cardiolipin synthase subfamily. ClsA sub-subfamily.

The protein resides in the cell inner membrane. The enzyme catalyses 2 a 1,2-diacyl-sn-glycero-3-phospho-(1'-sn-glycerol) = a cardiolipin + glycerol. In terms of biological role, catalyzes the reversible phosphatidyl group transfer from one phosphatidylglycerol molecule to another to form cardiolipin (CL) (diphosphatidylglycerol) and glycerol. The sequence is that of Cardiolipin synthase A from Pseudomonas putida (strain W619).